The primary structure comprises 293 residues: Glycerophosphodiester phosphodiesterase (293 aa).

The N-terminal stretch at 1–26 (MRKNRILALFVLSLGLLSFMVTPVSA) is a signal peptide. The region spanning 38 to 290 (ILTVAHRGAS…NYPDLFHKVK (253 aa)) is the GP-PDE domain. His43 acts as the Proton acceptor in catalysis. Sn-glycerol 3-phosphate-binding residues include His43, Arg44, and Glu70. Residues Glu70 and Asp72 each coordinate Ca(2+). Sn-glycerol 3-phosphate is bound by residues His85, Glu152, and Gln188. The active-site Proton donor is His85. Ca(2+) is bound at residue Glu152.

Belongs to the glycerophosphoryl diester phosphodiesterase family. Ca(2+) serves as cofactor.

The protein resides in the secreted. It catalyses the reaction a sn-glycero-3-phosphodiester + H2O = an alcohol + sn-glycerol 3-phosphate + H(+). Its function is as follows. Glycerophosphodiester phosphodiesterase hydrolyzes glycerophosphodiesters into glycerol-3-phosphate (G3P) and the corresponding alcohol. Involved in wall teichoic acid (WTA) metabolism during phosphate starvation. Catalyzes the degradation of WTA, enabling the utilization of WTA as a phosphate reserve under limiting conditions. Is highly selective for the poly(gylcerol phosphate) WTA backbone and catalyzes exolytic cleavage of individual monomer units. In vitro is active toward the WTA oligomer mimics glycerophosphoglycerol (GPG) and bis-glycerophosphoglycerol (bGPG). This chain is Glycerophosphodiester phosphodiesterase, found in Bacillus subtilis (strain 168).